The sequence spans 520 residues: Aspartate-proton symporter (520 aa).

14 helical membrane-spanning segments follow: residues 13-33, 49-69, 85-105, 130-150, 161-181, 201-221, 232-252, 281-301, 345-365, 366-386, 402-422, 425-445, 460-480, and 482-502; these read LFDL…LFAV, ILGG…GAAL, HLVG…LISI, TISG…LNYW, IISI…IFHF, AAIS…IVSV, IPIA…VLQV, IAVM…AILS, WLSF…NALV, NVCS…SAAL, MSII…WSGW, VSWL…FSKY, AWWL…GSFG, and GLGI…SLAI.

It belongs to the amino acid-polyamine-organocation (APC) superfamily. AGT (TC 2.A.3.11) family.

The protein resides in the cell membrane. In terms of biological role, uptake of L-aspartate with the concomitant import of a proton. Can also transport aspartate hydroxamate and L-glutamate with lower affinity and efficiency. The polypeptide is Aspartate-proton symporter (yveA) (Bacillus subtilis (strain 168)).